Reading from the N-terminus, the 1770-residue chain is Transposon Ty2-OR2 Gag-Pol polyprotein (1770 aa).

Disordered regions lie at residues 1–88 (MESQ…YQQH) and 359–449 (QHSE…SNDE). Polar residues-rich tracts occupy residues 19–39 (ASVTSKEVPSNQDPLAVSASN) and 49–60 (KVNSQEETTPGT). Residues 295-397 (ENNINVSDRL…SSKPRAAKAH (103 aa)) are RNA-binding. Residues 369–381 (TSPNTTNTKVTTR) show a composition bias toward low complexity. Polar residues-rich tracts occupy residues 399 to 408 (IATSSKFSRV) and 415 to 435 (ESTVSSQYLSDDNELSLGQQQ). The active-site For protease activity; shared with dimeric partner is Asp-457. The interval 579-636 (NVNKSKSVNKYPYPLIHRMLGHANFRSIQKSLKKNAVTYLKESDIEWSNASTYQCPDC) is integrase-type zinc finger-like. Residues 656–831 (ESYEPFQYLH…AGLDITTILP (176 aa)) enclose the Integrase catalytic domain. Positions 667 and 732 each coordinate Mg(2+). 4 disordered regions span residues 1005–1038 (GGTIESDTTSPRHSSTFTARNQKRPGSPNDMIDL), 1057–1135 (GGTE…KSSK), 1146–1165 (LPLPDLTHKSPTDTSDVSKD), and 1170–1205 (HSRQTNSSLGGMDDSNVLTTTKSKKRSLEDNETEIE). 2 stretches are compositionally biased toward polar residues: residues 1009-1024 (ESDTTSPRHSSTFTAR) and 1065-1082 (QRNSDTNIKYRTTNSTPS). Residues 1151–1165 (LTHKSPTDTSDVSKD) are compositionally biased toward basic and acidic residues. The Bipartite nuclear localization signal motif lies at 1193 to 1227 (KKRSLEDNETEIEVSRDTWNNKNMRSLEPPRSKKR). In terms of domain architecture, Reverse transcriptase Ty1/copia-type spans 1353–1491 (NDYYITQLDI…DILGLEIKYQ (139 aa)). Residues Asp-1361, Asp-1442, Asp-1443, Asp-1625, Glu-1667, and Asp-1700 each coordinate Mg(2+). In terms of domain architecture, RNase H Ty1/copia-type spans 1625-1767 (DASYGNQPYY…IKTFKLLTNK (143 aa)).

As to quaternary structure, the capsid protein forms a homotrimer, from which the VLPs are assembled. The protease is a homodimer, whose active site consists of two apposed aspartic acid residues. Post-translationally, initially, virus-like particles (VLPs) are composed of the structural unprocessed proteins Gag and Gag-Pol, and also contain the host initiator methionine tRNA (tRNA(i)-Met) which serves as a primer for minus-strand DNA synthesis, and a dimer of genomic Ty RNA. Processing of the polyproteins occurs within the particle and proceeds by an ordered pathway, called maturation. First, the protease (PR) is released by autocatalytic cleavage of the Gag-Pol polyprotein, and this cleavage is a prerequisite for subsequent processing at the remaining sites to release the mature structural and catalytic proteins. Maturation takes place prior to the RT reaction and is required to produce transposition-competent VLPs.

It is found in the cytoplasm. The protein resides in the nucleus. It catalyses the reaction DNA(n) + a 2'-deoxyribonucleoside 5'-triphosphate = DNA(n+1) + diphosphate. It carries out the reaction Endonucleolytic cleavage to 5'-phosphomonoester.. Functionally, capsid protein (CA) is the structural component of the virus-like particle (VLP), forming the shell that encapsulates the retrotransposons dimeric RNA genome. The particles are assembled from trimer-clustered units and there are holes in the capsid shells that allow for the diffusion of macromolecules. CA also has nucleocapsid-like chaperone activity, promoting primer tRNA(i)-Met annealing to the multipartite primer-binding site (PBS), dimerization of Ty2 RNA and initiation of reverse transcription. In terms of biological role, the aspartyl protease (PR) mediates the proteolytic cleavages of the Gag and Gag-Pol polyproteins after assembly of the VLP. Its function is as follows. Reverse transcriptase/ribonuclease H (RT) is a multifunctional enzyme that catalyzes the conversion of the retro-elements RNA genome into dsDNA within the VLP. The enzyme displays a DNA polymerase activity that can copy either DNA or RNA templates, and a ribonuclease H (RNase H) activity that cleaves the RNA strand of RNA-DNA heteroduplexes during plus-strand synthesis and hydrolyzes RNA primers. The conversion leads to a linear dsDNA copy of the retrotransposon that includes long terminal repeats (LTRs) at both ends. Integrase (IN) targets the VLP to the nucleus, where a subparticle preintegration complex (PIC) containing at least integrase and the newly synthesized dsDNA copy of the retrotransposon must transit the nuclear membrane. Once in the nucleus, integrase performs the integration of the dsDNA into the host genome. The protein is Transposon Ty2-OR2 Gag-Pol polyprotein (TY2B-OR2) of Saccharomyces cerevisiae (strain ATCC 204508 / S288c) (Baker's yeast).